Consider the following 170-residue polypeptide: Small ribosomal subunit protein bS18c (170 aa).

Disordered regions lie at residues 1 to 60 (MYTS…GPGD) and 149 to 170 (NRNL…SSDC). Repeats lie at residues 4 to 10 (SKQPFLK), 11 to 17 (SKQPFSK), 18 to 24 (SEQPFSK), 25 to 31 (SEQPFRK), 32 to 38 (SKQTFRK), 39 to 45 (FKQPFRK), and 46 to 52 (SKQPFRR). Positions 4 to 52 (SKQPFLKSKQPFSKSEQPFSKSEQPFRKSKQTFRKFKQPFRKSKQPFRR) are 7 X 7 AA tandem repeats. A compositionally biased stretch (polar residues) spans 13 to 26 (QPFSKSEQPFSKSE). Basic residues predominate over residues 30 to 55 (RKSKQTFRKFKQPFRKSKQPFRRRPR).

This sequence belongs to the bacterial ribosomal protein bS18 family. In terms of assembly, part of the 30S ribosomal subunit.

The protein resides in the plastid. The protein localises to the chloroplast. The protein is Small ribosomal subunit protein bS18c (rps18) of Secale cereale (Rye).